Reading from the N-terminus, the 313-residue chain is Sororin-like protein 1 (313 aa).

Positions 44-46 match the FGF motif motif; the sequence is FGF. The segment at 105-287 is disordered; that stretch reads ADENQQSVPT…NDNLKELTPG (183 aa). The span at 107–118 shows a compositional bias: polar residues; that stretch reads ENQQSVPTVSIA. Residues 123 to 134 are compositionally biased toward pro residues; sequence PELPPSSSPLLP. Residues 135–154 are compositionally biased toward low complexity; sequence PNGSESSSPIPLSLLSTSSL. Polar residues predominate over residues 155 to 170; the sequence is QQRKITPSNLSNTSKP. Basic residues predominate over residues 184 to 196; the sequence is HGHHLTRLRKKRR. The span at 249–264 shows a compositional bias: basic and acidic residues; sequence EKKILKTYHSQDKDTA. The C-terminal Sororin domain stretch occupies residues 288–310; that stretch reads KKEYLKSIKKYFQDVDDYQLHVV.

Belongs to the sororin family. Interacts with Pds5 and Psm3.

It is found in the nucleus. Regulator of sister chromatid cohesion in mitosis stabilizing cohesin complex association with chromatin. Antagonizes the action of wpl1 which stimulates cohesin dissociation from chromatin. Cohesion ensures that chromosome partitioning is accurate in dividing cells and may play an important role in DNA repair. This Schizosaccharomyces pombe (strain 972 / ATCC 24843) (Fission yeast) protein is Sororin-like protein 1.